We begin with the raw amino-acid sequence, 381 residues long: E3 ubiquitin-protein ligase RNF13 (381 aa).

Residues 1–34 form the signal peptide; it reads MLLSIGMLMLSATQVYTILTVQLFAFLNLLPVEA. Residues 35–182 are Lumenal-facing; that stretch reads DILAYNFENA…VPELSLPLEY (148 aa). Positions 64–160 constitute a PA domain; it reads LKGFLINSKP…GESSANSLKD (97 aa). Asn88 carries N-linked (GlcNAc...) asparagine glycosylation. Residues 183-203 traverse the membrane as a helical segment; that stretch reads YLIPFLIIVGICLILIVIFMI. At 204–381 the chain is on the cytoplasmic side; sequence TKFVQDRHRN…EQDYNIANTV (178 aa). The segment at 240–282 adopts an RING-type; atypical zinc-finger fold; it reads CAICLEEYEDGDKLRILPCSHAYHCKCVDPWLTKTKKTCPVCK. Residues 285–381 are disordered; the sequence is VVPSQGDSDS…EQDYNIANTV (97 aa). The segment covering 317-328 has biased composition (polar residues); the sequence is SARTQSFGSLSE. A compositionally biased stretch (acidic residues) spans 339–357; that stretch reads SDYEDDDNEETDSSDADNE. Polar residues predominate over residues 365–381; the sequence is VQLQPNGEQDYNIANTV.

Interacts with ERN1. Autoubiquitinated. Post-translationally, N-glycosylated and also modified with chondroitin sulfate. As to expression, expressed in the brain, heart, kidney, liver and spleen. Higher expression in adult tissues compared to the embryonic counterparts.

It localises to the endoplasmic reticulum membrane. Its subcellular location is the late endosome membrane. It is found in the lysosome membrane. The protein localises to the nucleus inner membrane. The catalysed reaction is S-ubiquitinyl-[E2 ubiquitin-conjugating enzyme]-L-cysteine + [acceptor protein]-L-lysine = [E2 ubiquitin-conjugating enzyme]-L-cysteine + N(6)-ubiquitinyl-[acceptor protein]-L-lysine.. Its pathway is protein modification; protein ubiquitination. Its function is as follows. E3 ubiquitin-protein ligase that regulates cell proliferation. Involved in apoptosis regulation. Mediates ER stress-induced activation of JNK signaling pathway and apoptosis by promoting ERN1 activation and splicing of XBP1 mRNA. Also involved in protein trafficking and localization. The polypeptide is E3 ubiquitin-protein ligase RNF13 (Rnf13) (Mus musculus (Mouse)).